Consider the following 303-residue polypeptide: Bifunctional protein FolD (303 aa).

NADP(+) is bound by residues 169 to 171 (GRG), Thr196, and Val237.

Belongs to the tetrahydrofolate dehydrogenase/cyclohydrolase family. In terms of assembly, homodimer.

It catalyses the reaction (6R)-5,10-methylene-5,6,7,8-tetrahydrofolate + NADP(+) = (6R)-5,10-methenyltetrahydrofolate + NADPH. It carries out the reaction (6R)-5,10-methenyltetrahydrofolate + H2O = (6R)-10-formyltetrahydrofolate + H(+). Its pathway is one-carbon metabolism; tetrahydrofolate interconversion. Functionally, catalyzes the oxidation of 5,10-methylenetetrahydrofolate to 5,10-methenyltetrahydrofolate and then the hydrolysis of 5,10-methenyltetrahydrofolate to 10-formyltetrahydrofolate. This is Bifunctional protein FolD from Micrococcus luteus (strain ATCC 4698 / DSM 20030 / JCM 1464 / CCM 169 / CCUG 5858 / IAM 1056 / NBRC 3333 / NCIMB 9278 / NCTC 2665 / VKM Ac-2230) (Micrococcus lysodeikticus).